Reading from the N-terminus, the 219-residue chain is ADP-sugar pyrophosphatase (219 aa).

Position 1 is an N-acetylmethionine (Met1). Phosphoserine is present on residues Ser3 and Ser10. Trp28 is a binding site for substrate. A Glycyl lysine isopeptide (Lys-Gly) (interchain with G-Cter in SUMO2) cross-link involves residue Lys42. Residue Thr45 is modified to Phosphothreonine. Substrate-binding positions include 46–47 (WE) and Arg51. Positions 57-197 (QTADGVAVIP…EEHLTVDARV (141 aa)) constitute a Nudix hydrolase domain. A Phosphotyrosine modification is found at Tyr74. Residue Arg84 coordinates substrate. Ala96 serves as a coordination point for Mg(2+). The Nudix box signature appears at 97 to 118 (GLIDDGETPEAAALRELEEETG). Residue Leu98 participates in substrate binding. Mg(2+) is bound by residues Glu112 and Glu116. Substrate is bound at residue Asp133. Position 166 (Glu166) interacts with Mg(2+). Residues Lys210 and Lys218 each carry the N6-acetyllysine modification.

Belongs to the Nudix hydrolase family. As to quaternary structure, homodimer. Interacts with PARG. It depends on Mg(2+) as a cofactor. In terms of processing, phosphorylation at Thr-45 is required for homodimer stability; dephosphorylation results in destabilization of the homodimer. Dephosphorylation at Thr-45 promotes the ATP-synthesis activity. In terms of tissue distribution, widely expressed. Most abundant in liver.

Its subcellular location is the nucleus. It catalyses the reaction D-ribose 5-phosphate + ATP + H(+) = ADP-D-ribose + diphosphate. It carries out the reaction ADP-D-ribose + H2O = D-ribose 5-phosphate + AMP + 2 H(+). The enzyme catalyses 8-oxo-dGDP + H2O = 8-oxo-dGMP + phosphate + H(+). Functionally, enzyme that can either act as an ADP-sugar pyrophosphatase in absence of diphosphate or catalyze the synthesis of ATP in presence of diphosphate. In absence of diphosphate, hydrolyzes with similar activities various modified nucleoside diphosphates such as ADP-ribose, ADP-mannose, ADP-glucose, 8-oxo-GDP and 8-oxo-dGDP. Can also hydrolyze other nucleotide sugars with low activity. In presence of diphosphate, mediates the synthesis of ATP in the nucleus by catalyzing the conversion of ADP-ribose to ATP and ribose 5-phosphate. Nuclear ATP synthesis takes place when dephosphorylated at Thr-45. Nuclear ATP generation is required for extensive chromatin remodeling events that are energy-consuming. Does not play a role in U8 snoRNA decapping activity. Binds U8 snoRNA. This Homo sapiens (Human) protein is ADP-sugar pyrophosphatase (NUDT5).